A 442-amino-acid polypeptide reads, in one-letter code: GDP-L-galactose phosphorylase 1 (442 aa).

Residue His-238 is the Tele-GMP-histidine intermediate of the active site.

This sequence belongs to the GDPGP1 family. As to quaternary structure, interacts with TLP1. Expressed in leaves, stems, roots, flowers and siliques. Highest expression in green tissues.

The protein localises to the cytoplasm. It localises to the nucleus. The catalysed reaction is GDP-beta-L-galactose + phosphate = beta-L-galactose 1-phosphate + GDP + H(+). It functions in the pathway cofactor biosynthesis; L-ascorbate biosynthesis via GDP-alpha-D-mannose pathway; L-ascorbate from GDP-alpha-D-mannose: step 2/5. Not inhibited by dithiothreitol, N-ethylmaleimide, phenylmethane sulfonyl fluoride, ascorbate, L-galactose and L-galactonolactone. Catalyzes a reaction of the Smirnoff-Wheeler pathway, the major route to ascorbate biosynthesis in plants. Acts as a phosphorylase rather than as a transferase. Uses preferentially GDP-L-galactose and GDP-D-glucose as substrates. Lower activity with GDP-L-fucose, very low activity with GDP-D-mannose, and no activity with UDP-D-glucose, UDP-D-galactose or ADP-D-glucose. Highly specific for inorganic phosphate as the guanylyl acceptor. The sequence is that of GDP-L-galactose phosphorylase 1 (VTC2) from Arabidopsis thaliana (Mouse-ear cress).